A 278-amino-acid chain; its full sequence is Large ribosomal subunit protein uL2 (278 aa).

The interval 222 to 278 is disordered; the sequence is GVVMNPIDHPHGGGEGRTSGGRHPVTPWGKPTKGKKTRSNKSTDKFILISRHKRKKK.

Belongs to the universal ribosomal protein uL2 family. As to quaternary structure, part of the 50S ribosomal subunit. Forms a bridge to the 30S subunit in the 70S ribosome.

Its function is as follows. One of the primary rRNA binding proteins. Required for association of the 30S and 50S subunits to form the 70S ribosome, for tRNA binding and peptide bond formation. It has been suggested to have peptidyltransferase activity; this is somewhat controversial. Makes several contacts with the 16S rRNA in the 70S ribosome. This chain is Large ribosomal subunit protein uL2, found in Rhodopseudomonas palustris (strain BisB5).